The chain runs to 422 residues: Serine hydroxymethyltransferase (422 aa).

(6S)-5,6,7,8-tetrahydrofolate contacts are provided by residues leucine 113 and 117-119 (GHL). Residue lysine 222 is modified to N6-(pyridoxal phosphate)lysine.

This sequence belongs to the SHMT family. As to quaternary structure, homodimer. Requires pyridoxal 5'-phosphate as cofactor.

Its subcellular location is the cytoplasm. The enzyme catalyses (6R)-5,10-methylene-5,6,7,8-tetrahydrofolate + glycine + H2O = (6S)-5,6,7,8-tetrahydrofolate + L-serine. Its pathway is one-carbon metabolism; tetrahydrofolate interconversion. It participates in amino-acid biosynthesis; glycine biosynthesis; glycine from L-serine: step 1/1. Functionally, catalyzes the reversible interconversion of serine and glycine with tetrahydrofolate (THF) serving as the one-carbon carrier. This reaction serves as the major source of one-carbon groups required for the biosynthesis of purines, thymidylate, methionine, and other important biomolecules. Also exhibits THF-independent aldolase activity toward beta-hydroxyamino acids, producing glycine and aldehydes, via a retro-aldol mechanism. The sequence is that of Serine hydroxymethyltransferase from Amoebophilus asiaticus (strain 5a2).